The chain runs to 544 residues: MKPAELKRLYRIVKVQLEYGLDELLPEHHLTRAPLLARKSLFWLRNQHADKALGDRLRLALQELGPVWIKFGQMMSTRRDLFPPHIADPLAMLQDKVAPFDGLQAKQLIEEELGAPLETWFDDFDIKPLASASIAQVHTAKLKSNGRDVVLKVIRPDIRPQIDADIKLMYRVARIVAKALPEARRLKPVEVVREYEKTLLDELDLRREAANAIQLRRNFENSEELYVPEVLTDFCNETVMVSERIYGIQVSDLAGLHANGTNMKLLAERGVSVFFTQVFRDSFFHADMHPGNVFVNPNHPENPQWIGLDCGIVGTLNSEDKRYLAENFLAFFNRDYRRVAQLHVDSGWVPLDTNVDEFEVAIRMVCEPIFAKPLCEISFGHVLLNLFNTARRFNMEVQPQLVLLQKTLLYVEGLGRQLYPQLDLWQTAKPFLEKWMANQVGPQAFLHALKERAPLWFEKMPELPELLYDSLKQGRNLNQRLDNLYQGYRQSKRQQGTGKFLFGVGATLVVCSAIWISNQLEPLAIGSATIGVLCWLLSWRAYRQ.

One can recognise a Protein kinase domain in the interval 123-501 (DFDIKPLASA…KRQQGTGKFL (379 aa)). ATP-binding positions include 129–137 (LASASIAQV) and lysine 152. The active-site Proton acceptor is aspartate 287. A run of 2 helical transmembrane segments spans residues 496-516 (GTGK…AIWI) and 519-539 (QLEP…LLSW).

The protein belongs to the ABC1 family. UbiB subfamily.

Its subcellular location is the cell inner membrane. It functions in the pathway cofactor biosynthesis; ubiquinone biosynthesis [regulation]. In terms of biological role, is probably a protein kinase regulator of UbiI activity which is involved in aerobic coenzyme Q (ubiquinone) biosynthesis. This Vibrio cholerae serotype O1 (strain ATCC 39315 / El Tor Inaba N16961) protein is Probable protein kinase UbiB.